Consider the following 384-residue polypeptide: 8-amino-7-oxononanoate synthase (384 aa).

Substrate is bound at residue Arg21. A pyridoxal 5'-phosphate-binding site is contributed by 108 to 109; it reads GF. Residue His133 coordinates substrate. The pyridoxal 5'-phosphate site is built by Ser179, His207, and Thr233. Lys236 is modified (N6-(pyridoxal phosphate)lysine). Thr352 provides a ligand contact to substrate.

Belongs to the class-II pyridoxal-phosphate-dependent aminotransferase family. BioF subfamily. In terms of assembly, homodimer. Pyridoxal 5'-phosphate serves as cofactor.

The catalysed reaction is 6-carboxyhexanoyl-[ACP] + L-alanine + H(+) = (8S)-8-amino-7-oxononanoate + holo-[ACP] + CO2. It participates in cofactor biosynthesis; biotin biosynthesis. Its function is as follows. Catalyzes the decarboxylative condensation of pimeloyl-[acyl-carrier protein] and L-alanine to produce 8-amino-7-oxononanoate (AON), [acyl-carrier protein], and carbon dioxide. The chain is 8-amino-7-oxononanoate synthase from Shigella dysenteriae serotype 1 (strain Sd197).